We begin with the raw amino-acid sequence, 575 residues long: Chaperonin CPN60-1, mitochondrial (575 aa).

A mitochondrion-targeting transit peptide spans 1-32 (MHRFATGLASKARLARNGANQIASRSNWRRNY).

The protein belongs to the chaperonin (HSP60) family.

It localises to the mitochondrion. In terms of biological role, implicated in mitochondrial protein import and macromolecular assembly. May facilitate the correct folding of imported proteins. May also prevent misfolding and promote the refolding and proper assembly of unfolded polypeptides generated under stress conditions in the mitochondrial matrix. The protein is Chaperonin CPN60-1, mitochondrial (CPN60-1) of Cucurbita maxima (Pumpkin).